A 533-amino-acid chain; its full sequence is Putative adhesin domain-containing protein LiaX (533 aa).

The tract at residues 1–277 (MKERERVLEL…EFNYPNPQAS (277 aa)) is binds the antibiotic daptomycin (DAP) and the antimicrobial peptide human LL-37, under physiologically relevant concentrations. Protects the OG1RF and S613 strains from LL-37-mediated killing in a concentration-dependent manner. Residues 63–89 (NALEKGESEGPTVDSFEENTQDSAEKD) form a disordered region. The stretch at 83–186 (QDSAEKDREN…EEELKNIRKE (104 aa)) forms a coiled coil. The interval 279 to 526 (IDVKVANGTV…INASTTTGSI (248 aa)) is putative adhesin region. The tract at residues 289 to 526 (VFKTWDQEDV…INASTTTGSI (238 aa)) is involved in cell membrane remodeling.

In terms of processing, may undergo proteolytic cleavage, allowing release of the N-terminal region into the extracellular environment.

It is found in the secreted. The protein resides in the cell wall. The protein localises to the cell membrane. Functionally, involved in cell membrane remodeling, perhaps acting by negative modulation of the liaFSR and liaXYZ gene clusters, thereby regulating content and localization of anionic phospholipids. Binds to the antibiotic daptomycin (DAP) and to cationic antimicrobial peptides, such as human LL-37, perhaps functioning as a sensor that activates the cell envelope stress response. In Enterococcus faecalis (strain ATCC 700802 / V583), this protein is Putative adhesin domain-containing protein LiaX.